We begin with the raw amino-acid sequence, 159 residues long: Histone H2A (159 aa).

Residues 1-10 (MDSTGTGAGG) show a composition bias toward gly residues. 2 disordered regions span residues 1-31 (MDSTGTGAGGKGKKGAAGRKVGGPRKKSVSR) and 133-159 (KTAEKASSGGSKEAKSPKKAAKSPKKA). 2 stretches are compositionally biased toward basic residues: residues 11–29 (KGKKGAAGRKVGGPRKKSV) and 149–159 (PKKAAKSPKKA). 2 short sequence motifs (SPKK motif) span residues 148–151 (SPKK) and 155–158 (SPKK).

The protein belongs to the histone H2A family. The nucleosome is a histone octamer containing two molecules each of H2A, H2B, H3 and H4 assembled in one H3-H4 heterotetramer and two H2A-H2B heterodimers. The octamer wraps approximately 147 bp of DNA.

It localises to the nucleus. It is found in the chromosome. Functionally, core component of nucleosome. Nucleosomes wrap and compact DNA into chromatin, limiting DNA accessibility to the cellular machineries which require DNA as a template. Histones thereby play a central role in transcription regulation, DNA repair, DNA replication and chromosomal stability. DNA accessibility is regulated via a complex set of post-translational modifications of histones, also called histone code, and nucleosome remodeling. This is Histone H2A from Zea mays (Maize).